The sequence spans 150 residues: Troponin C, isoform 2A (150 aa).

Position 1 is an N-acetylmethionine (Met1). EF-hand domains lie at 7–42, 43–78, 83–118, and 119–150; these read EQIG…MGVK, ISEK…FLIE, ALKT…LDNR, and LTEE…MMNG. 5 residues coordinate Ca(2+): Asp56, Asp58, Ser60, Glu62, and Glu67. The Ca(2+) site is built by Asp132, Asp134, Ser136, Thr138, and Glu143.

This sequence belongs to the troponin C family.

Functionally, troponin is the central regulatory protein of striated muscle contraction. Tn consists of three components: Tn-I which is the inhibitor of actomyosin ATPase, Tn-T which contains the binding site for tropomyosin and Tn-C. The binding of calcium to Tn-C abolishes the inhibitory action of Tn on actin filaments. In Homarus americanus (American lobster), this protein is Troponin C, isoform 2A.